The sequence spans 359 residues: Salicylate carboxymethyltransferase (359 aa).

Tyr-18 lines the S-adenosyl-L-methionine pocket. Substrate contacts are provided by residues Tyr-18, 21-25, and Gln-25; that span reads NSFIQ. S-adenosyl-L-methionine is bound by residues Gly-59, 59 to 60, 59 to 61, Asn-65, 96 to 99, Asp-98, 129 to 131, and 146 to 148; these read GC, GCS, LNDL, SFY, and SYS. Residues 147–151 and Trp-151 contribute to the substrate site; that span reads YSLMW. The Mg(2+) site is built by Asn-162, Asp-248, Phe-250, and Asn-251. Residue Tyr-255 participates in substrate binding.

This sequence belongs to the methyltransferase superfamily. SABATH family.

It catalyses the reaction salicylate + S-adenosyl-L-methionine = methyl salicylate + S-adenosyl-L-homocysteine. In terms of biological role, catalyzes the methylation of the free carboxyl end of the plant hormone salicylic acid (SA). Converts SA to SA methyl ester (MSA). The volatile compound MSA is hypothesized to act as an airborne signal that triggers defense responses in uninfected plants. MSA is an important chemoattractant for moth pollinated flowering plants. The protein is Salicylate carboxymethyltransferase (SAMT) of Clarkia breweri (Fairy fans).